The chain runs to 302 residues: 4-hydroxy-tetrahydrodipicolinate synthase (302 aa).

Pyruvate is bound at residue Thr-55. The active-site Proton donor/acceptor is the Tyr-144. Lys-172 functions as the Schiff-base intermediate with substrate in the catalytic mechanism. Val-214 contributes to the pyruvate binding site.

The protein belongs to the DapA family. As to quaternary structure, homotetramer; dimer of dimers.

The protein localises to the cytoplasm. The catalysed reaction is L-aspartate 4-semialdehyde + pyruvate = (2S,4S)-4-hydroxy-2,3,4,5-tetrahydrodipicolinate + H2O + H(+). It functions in the pathway amino-acid biosynthesis; L-lysine biosynthesis via DAP pathway; (S)-tetrahydrodipicolinate from L-aspartate: step 3/4. Catalyzes the condensation of (S)-aspartate-beta-semialdehyde [(S)-ASA] and pyruvate to 4-hydroxy-tetrahydrodipicolinate (HTPA). This Prochlorococcus marinus (strain MIT 9211) protein is 4-hydroxy-tetrahydrodipicolinate synthase.